The chain runs to 131 residues: Large ribosomal subunit protein bL12c (131 aa).

Positions 106–125 are enriched in basic and acidic residues; that stretch reads KDNTNKENSEEIKQQLEEAG. The tract at residues 106–131 is disordered; it reads KDNTNKENSEEIKQQLEEAGAKVSIK.

The protein belongs to the bacterial ribosomal protein bL12 family. Homodimer. Part of the ribosomal stalk of the 50S ribosomal subunit. Forms a multimeric L10(L12)X complex, where L10 forms an elongated spine to which 2 to 4 L12 dimers bind in a sequential fashion. Binds GTP-bound translation factors.

The protein localises to the plastid. It is found in the chloroplast. Forms part of the ribosomal stalk which helps the ribosome interact with GTP-bound translation factors. Is thus essential for accurate translation. In Gracilaria tenuistipitata var. liui (Red alga), this protein is Large ribosomal subunit protein bL12c.